The following is a 153-amino-acid chain: uncharacterized protein (153 aa).

The next 3 helical transmembrane spans lie at 17–37 (ITLI…SMFF), 44–64 (FLLC…IGMG), and 118–138 (FVFI…TLII).

The protein to M.jannaschii MJ0129 and MJ0554.

The protein localises to the cell membrane. This is an uncharacterized protein from Methanocaldococcus jannaschii (strain ATCC 43067 / DSM 2661 / JAL-1 / JCM 10045 / NBRC 100440) (Methanococcus jannaschii).